We begin with the raw amino-acid sequence, 1273 residues long: Probable methionine synthase (1273 aa).

Positions 7–327 (FKELADIAKE…DHINAMYKAV (321 aa)) constitute a Hcy-binding domain. 3 residues coordinate Zn(2+): C249, C312, and C313. The Pterin-binding domain maps to 360-621 (FVNIGERCNV…IDKPLLQLLE (262 aa)). Residues 652-749 (KTDEWRNTSV…FMDAERQANI (98 aa)) enclose the B12-binding N-terminal domain. Methylcob(III)alamin contacts are provided by residues E699, 772 to 776 (GDVHD), H775, S820, T824, and A876. In terms of domain architecture, B12-binding spans 762–897 (QGTVVIATVK…DMTVRDAFLQ (136 aa)). In terms of domain architecture, AdoMet activation spans 927 to 1273 (SLKDRRFVAL…LSPIIGYELD (347 aa)). Residues D977, R1171, and 1225–1226 (YF) contribute to the S-adenosyl-L-methionine site.

This sequence belongs to the vitamin-B12 dependent methionine synthase family. Methylcob(III)alamin is required as a cofactor. Zn(2+) serves as cofactor.

It catalyses the reaction (6S)-5-methyl-5,6,7,8-tetrahydrofolate + L-homocysteine = (6S)-5,6,7,8-tetrahydrofolate + L-methionine. It participates in amino-acid biosynthesis; L-methionine biosynthesis via de novo pathway; L-methionine from L-homocysteine (MetH route): step 1/1. Catalyzes the transfer of a methyl group from methyl-cobalamin to homocysteine, yielding enzyme-bound cob(I)alamin and methionine. Subsequently, remethylates the cofactor using methyltetrahydrofolate. The polypeptide is Probable methionine synthase (metr-1) (Caenorhabditis briggsae).